Reading from the N-terminus, the 421-residue chain is 3-phosphoshikimate 1-carboxyvinyltransferase (421 aa).

The 3-phosphoshikimate site is built by lysine 20, serine 21, and arginine 25. Lysine 20 lines the phosphoenolpyruvate pocket. 2 residues coordinate phosphoenolpyruvate: glycine 90 and arginine 117. 3-phosphoshikimate-binding residues include serine 162, serine 163, glutamine 164, serine 190, aspartate 304, and lysine 331. Glutamine 164 provides a ligand contact to phosphoenolpyruvate. Catalysis depends on aspartate 304, which acts as the Proton acceptor. Phosphoenolpyruvate-binding residues include arginine 335 and arginine 376.

Belongs to the EPSP synthase family. In terms of assembly, monomer.

The protein localises to the cytoplasm. It carries out the reaction 3-phosphoshikimate + phosphoenolpyruvate = 5-O-(1-carboxyvinyl)-3-phosphoshikimate + phosphate. It participates in metabolic intermediate biosynthesis; chorismate biosynthesis. Catalyzes the transfer of the enolpyruvyl moiety of phosphoenolpyruvate (PEP) to the 5-hydroxyl of shikimate-3-phosphate (S3P) to produce enolpyruvyl shikimate-3-phosphate and inorganic phosphate. In Methanothrix thermoacetophila (strain DSM 6194 / JCM 14653 / NBRC 101360 / PT) (Methanosaeta thermophila), this protein is 3-phosphoshikimate 1-carboxyvinyltransferase.